The primary structure comprises 196 residues: Transcriptional regulatory protein UhpA (196 aa).

The Response regulatory domain occupies 3 to 116 (TVALIDDHLI…ELIAAVHTVA (114 aa)). 4-aspartylphosphate is present on Asp-54. Residues 131-196 (ASGRQDPLTK…ELARRMFDGW (66 aa)) enclose the HTH luxR-type domain. The segment at residues 155-174 (VKEIAAELGLSPKTVHVHRA) is a DNA-binding region (H-T-H motif).

Post-translationally, phosphorylated and dephosphorylated by UhpB.

Its subcellular location is the cytoplasm. With respect to regulation, phosphorylation by UhpB enhances DNA binding activity. Functionally, part of the UhpABC signaling cascade that controls the expression of the hexose phosphate transporter UhpT. Activates the transcription of the uhpT gene. Acts by binding specifically to the uhpT promoter region. This chain is Transcriptional regulatory protein UhpA (uhpA), found in Escherichia coli (strain K12).